A 231-amino-acid polypeptide reads, in one-letter code: Putative cobalt transport protein CbiM 1 (231 aa).

6 helical membrane-spanning segments follow: residues 9 to 29 (PGPW…YGIF), 41 to 61 (VLPL…LKLP), 74 to 94 (GMAV…IVLL), 107 to 127 (TFGA…YAIY), 135 to 155 (VNFY…TYVV), and 181 to 201 (VFAI…TLLF).

The protein belongs to the CbiM family. In terms of assembly, forms an energy-coupling factor (ECF) transporter complex composed of an ATP-binding protein (A component, CbiO), a transmembrane protein (T component, CbiQ) and 2 possible substrate-capture proteins (S components, CbiM and CbiN) of unknown stoichimetry.

It localises to the cell membrane. It functions in the pathway cofactor biosynthesis; adenosylcobalamin biosynthesis. Its function is as follows. Part of the energy-coupling factor (ECF) transporter complex CbiMNOQ involved in cobalt import. The protein is Putative cobalt transport protein CbiM 1 of Methanosarcina barkeri (strain Fusaro / DSM 804).